Reading from the N-terminus, the 411-residue chain is Tyrosine--tRNA ligase (411 aa).

Y34 is an L-tyrosine binding site. A 'HIGH' region motif is present at residues C39–S48. Residues Y171 and Q175 each contribute to the L-tyrosine site. The short motif at K231–T235 is the 'KMSKS' region element. K234 is an ATP binding site. Residues I345–V411 form the S4 RNA-binding domain.

Belongs to the class-I aminoacyl-tRNA synthetase family. TyrS type 1 subfamily. In terms of assembly, homodimer.

Its subcellular location is the cytoplasm. It carries out the reaction tRNA(Tyr) + L-tyrosine + ATP = L-tyrosyl-tRNA(Tyr) + AMP + diphosphate + H(+). Catalyzes the attachment of tyrosine to tRNA(Tyr) in a two-step reaction: tyrosine is first activated by ATP to form Tyr-AMP and then transferred to the acceptor end of tRNA(Tyr). This is Tyrosine--tRNA ligase from Rickettsia peacockii (strain Rustic).